We begin with the raw amino-acid sequence, 274 residues long: Large ribosomal subunit protein uL2 (274 aa).

Disordered regions lie at residues 28 to 54 (KPYA…TRHI) and 221 to 274 (RGTA…RTKK). The span at 39 to 49 (KTGGRNNNGRI) shows a compositional bias: polar residues.

This sequence belongs to the universal ribosomal protein uL2 family. As to quaternary structure, part of the 50S ribosomal subunit. Forms a bridge to the 30S subunit in the 70S ribosome.

In terms of biological role, one of the primary rRNA binding proteins. Required for association of the 30S and 50S subunits to form the 70S ribosome, for tRNA binding and peptide bond formation. It has been suggested to have peptidyltransferase activity; this is somewhat controversial. Makes several contacts with the 16S rRNA in the 70S ribosome. In Photorhabdus laumondii subsp. laumondii (strain DSM 15139 / CIP 105565 / TT01) (Photorhabdus luminescens subsp. laumondii), this protein is Large ribosomal subunit protein uL2.